Here is a 168-residue protein sequence, read N- to C-terminus: Plastocyanin B, chloroplastic (168 aa).

The N-terminal 69 residues, M1–A69, are a transit peptide targeting the chloroplast. One can recognise a Plastocyanin-like domain in the interval V70–N168. The Cu cation site is built by H106, C153, H156, and M161.

This sequence belongs to the plastocyanin family. The cofactor is Cu(2+).

The protein resides in the plastid. Its subcellular location is the chloroplast thylakoid membrane. Participates in electron transfer between P700 and the cytochrome b6-f complex in photosystem I. The protein is Plastocyanin B, chloroplastic (PETE) of Populus nigra (Lombardy poplar).